The primary structure comprises 397 residues: SET domain-containing protein 4 (397 aa).

Positions 29–245 constitute an SET domain; sequence AKLEPCRFKE…KCSEVFINYG (217 aa). S-adenosyl-L-methionine is bound at residue Tyr-244.

The protein belongs to the class V-like SAM-binding methyltransferase superfamily. SETD4 family.

The protein localises to the nucleus. It carries out the reaction L-lysyl(79)-[histone H3] + 3 S-adenosyl-L-methionine = N(6),N(6),N(6)-trimethyl-L-lysyl(79)-[histone H3] + 3 S-adenosyl-L-homocysteine + 3 H(+). The enzyme catalyses L-lysyl(20)-[histone H4] + S-adenosyl-L-methionine = N(6)-methyl-L-lysyl(20)-[histone H4] + S-adenosyl-L-homocysteine + H(+). It catalyses the reaction N(6)-methyl-L-lysyl(20)-[histone H4] + S-adenosyl-L-methionine = N(6),N(6)-dimethyl-L-lysyl(20)-[histone H4] + S-adenosyl-L-homocysteine + H(+). The catalysed reaction is N(6),N(6)-dimethyl-L-lysyl(20)-[histone H4] + S-adenosyl-L-methionine = N(6),N(6),N(6)-trimethyl-L-lysyl(20)-[histone H4] + S-adenosyl-L-homocysteine + H(+). Its function is as follows. Protein-lysine N-methyltransferase involved in the regulation of cell quiescence by catalyzing the trimethylation of 'Lys-20' of histone H4 and 'Lys-79' of histone H3 (H4K20me3 and H3K79me3, respectively) during diapause formation, a state of obligate dormancy. The polypeptide is SET domain-containing protein 4 (Artemia parthenogenetica (Brine shrimp)).